A 237-amino-acid chain; its full sequence is 3-oxoacyl-[acyl-carrier-protein] reductase (237 aa).

An N-acetylmethionine modification is found at M1. Residues 11–14 and 34–35 contribute to the NADP(+) site; these read SRGI and RN. K40 carries the N6-acetyllysine modification. NADP(+) contacts are provided by residues D56 and 83 to 85; that span reads AAG. Position 96 is an N6-acetyllysine (K96). S135 contributes to the substrate binding site. Residues Y148, K152, and 181–183 each bind NADP(+); that span reads VHT. Y148 functions as the Proton acceptor in the catalytic mechanism. At K195 the chain carries N6-acetyllysine.

It belongs to the short-chain dehydrogenases/reductases (SDR) family. In terms of assembly, homotetramer (in vitro). Heterotetramer with HSD17B8; contains two molecules each of HSD17B8 and CBR4. Does not form homotetramers when HSD17B8 is coexpressed, only heterotetramers (in vitro). As to expression, detected in liver and kidney (at protein level). Displays the highest expression in neuronal and muscle tissues.

It localises to the mitochondrion matrix. It catalyses the reaction a (3R)-hydroxyacyl-[ACP] + NADP(+) = a 3-oxoacyl-[ACP] + NADPH + H(+). The enzyme catalyses a quinone + NADPH + H(+) = a quinol + NADP(+). The protein operates within lipid metabolism; fatty acid biosynthesis. Functionally, component of the heterotetramer complex KAR (3-ketoacyl-[acyl carrier protein] reductase or 3-ketoacyl-[ACP] reductase) that forms part of the mitochondrial fatty acid synthase (mtFAS). Beta-subunit of the KAR heterotetramer complex, responsible for the 3-ketoacyl-ACP reductase activity of the mtFAS, reduces 3-oxoacyl-[ACP] to (3R)-hydroxyacyl-[ACP] in a NADPH-dependent manner with no chain length preference, thereby participating in mitochondrial fatty acid biosynthesis. The homotetramer has NADPH-dependent quinone reductase activity (in vitro), hence could play a role in protection against cytotoxicity of exogenous quinones. As a heterotetramer, it can also reduce 9,10-phenanthrenequinone, 1,4-benzoquinone and various other o-quinones and p-quinones (in vitro). The polypeptide is 3-oxoacyl-[acyl-carrier-protein] reductase (CBR4) (Homo sapiens (Human)).